Reading from the N-terminus, the 227-residue chain is Ribonuclease 3 (227 aa).

Residues 4–133 (FEKLEKLLSY…LIAAIYLDSN (130 aa)) form the RNase III domain. Glu-46 provides a ligand contact to Mg(2+). The active site involves Asp-50. Mg(2+)-binding residues include Asn-119 and Glu-122. Residue Glu-122 is part of the active site. In terms of domain architecture, DRBM spans 158–226 (DPKTALQEWA…ARSLLHRLKN (69 aa)).

This sequence belongs to the ribonuclease III family. In terms of assembly, homodimer. Requires Mg(2+) as cofactor.

It is found in the cytoplasm. The enzyme catalyses Endonucleolytic cleavage to 5'-phosphomonoester.. Functionally, digests double-stranded RNA. Involved in the processing of primary rRNA transcript to yield the immediate precursors to the large and small rRNAs (23S and 16S). Processes some mRNAs, and tRNAs when they are encoded in the rRNA operon. Processes pre-crRNA and tracrRNA of type II CRISPR loci if present in the organism. The polypeptide is Ribonuclease 3 (Rickettsia africae (strain ESF-5)).